The primary structure comprises 454 residues: Phosphoglucosamine mutase (454 aa).

Catalysis depends on S101, which acts as the Phosphoserine intermediate. Residues S101, D243, D245, and D247 each coordinate Mg(2+). At S101 the chain carries Phosphoserine.

Belongs to the phosphohexose mutase family. Requires Mg(2+) as cofactor. Activated by phosphorylation.

The catalysed reaction is alpha-D-glucosamine 1-phosphate = D-glucosamine 6-phosphate. In terms of biological role, catalyzes the conversion of glucosamine-6-phosphate to glucosamine-1-phosphate. The chain is Phosphoglucosamine mutase from Geobacter sp. (strain M21).